Reading from the N-terminus, the 136-residue chain is Large ribosomal subunit protein bL17 (136 aa).

It belongs to the bacterial ribosomal protein bL17 family. In terms of assembly, part of the 50S ribosomal subunit. Contacts protein L32.

In Rhodopseudomonas palustris (strain BisA53), this protein is Large ribosomal subunit protein bL17.